Reading from the N-terminus, the 523-residue chain is Bifunctional purine biosynthesis protein PurH (523 aa).

One can recognise an MGS-like domain in the interval 1–152 (MSTDDGRRPI…KNHPSAAVVT (152 aa)).

The protein belongs to the PurH family.

It carries out the reaction (6R)-10-formyltetrahydrofolate + 5-amino-1-(5-phospho-beta-D-ribosyl)imidazole-4-carboxamide = 5-formamido-1-(5-phospho-D-ribosyl)imidazole-4-carboxamide + (6S)-5,6,7,8-tetrahydrofolate. The enzyme catalyses IMP + H2O = 5-formamido-1-(5-phospho-D-ribosyl)imidazole-4-carboxamide. It participates in purine metabolism; IMP biosynthesis via de novo pathway; 5-formamido-1-(5-phospho-D-ribosyl)imidazole-4-carboxamide from 5-amino-1-(5-phospho-D-ribosyl)imidazole-4-carboxamide (10-formyl THF route): step 1/1. It functions in the pathway purine metabolism; IMP biosynthesis via de novo pathway; IMP from 5-formamido-1-(5-phospho-D-ribosyl)imidazole-4-carboxamide: step 1/1. This chain is Bifunctional purine biosynthesis protein PurH, found in Mycobacterium bovis (strain BCG / Pasteur 1173P2).